We begin with the raw amino-acid sequence, 241 residues long: Small ribosomal subunit protein uS2 (241 aa).

The protein belongs to the universal ribosomal protein uS2 family.

The polypeptide is Small ribosomal subunit protein uS2 (Salmonella agona (strain SL483)).